A 38-amino-acid chain; its full sequence is Photosystem II reaction center protein L (38 aa).

A helical transmembrane segment spans residues 17–37; the sequence is SLYWGLLLIFVLAVLFSNYFF.

It belongs to the PsbL family. PSII is composed of 1 copy each of membrane proteins PsbA, PsbB, PsbC, PsbD, PsbE, PsbF, PsbH, PsbI, PsbJ, PsbK, PsbL, PsbM, PsbT, PsbX, PsbY, PsbZ, Psb30/Ycf12, at least 3 peripheral proteins of the oxygen-evolving complex and a large number of cofactors. It forms dimeric complexes.

The protein resides in the plastid. It localises to the chloroplast thylakoid membrane. Functionally, one of the components of the core complex of photosystem II (PSII). PSII is a light-driven water:plastoquinone oxidoreductase that uses light energy to abstract electrons from H(2)O, generating O(2) and a proton gradient subsequently used for ATP formation. It consists of a core antenna complex that captures photons, and an electron transfer chain that converts photonic excitation into a charge separation. This subunit is found at the monomer-monomer interface and is required for correct PSII assembly and/or dimerization. The polypeptide is Photosystem II reaction center protein L (Oenothera argillicola (Appalachian evening primrose)).